The primary structure comprises 193 residues: Protein PATRONUS 1 (193 aa).

The DEN-box motif lies at 14–16 (DEN). The D-box motif lies at 46–49 (RKAL).

As to quaternary structure, interacts directly with the anaphase promoting complex/cyclosome (APC/C) through the CDC27B and CDC20-1 subunits. In terms of tissue distribution, expressed in somatic and reproductive tissues. Expressed in inflorescence, young buds, roots and basal portion of young leaves. Expressed in proliferating cells such as apical meristems of roots and shoots, expanding cotyledons and leaves, root vascular tissues, and in stomatal precursor cells.

It localises to the nucleus. Its subcellular location is the cytoplasm. Its function is as follows. Required for the maintenance of centromeric cohesion during interkinesis, until meiosis II. Required for regular configuration and segregation of sister chromatids in meiosis II. Also required for centromere cohesion during meiosis I. Involved in spindle organization at the end of telophase I and in meiosis II. Required to prevent precocious release of pericentromeric cohesins during meiosis, but not for cohesion establishment and monopolar orientation of kinetochores at meiosis I. Involved also in somatic development. Regulates mitotic cell division and ploidy stability in somatic cell types. May be involved in the organization of microtubules dynamics. Involved in abiotic stresses and mono- or divalent ions tolerance and may play a role in maintaining meristematic activity under saline conditions. PANS1 and GIG1 are part of a network linking centromere cohesion and cell cycle progression through control of APC/C activity. Regulates the number of dividing cells in root meristem and is necessary for the anaphase onset control through an APC/C-mediated pathway. Involved in maintaining correct chromosome arm cohesion under stress conditions. The polypeptide is Protein PATRONUS 1 (Arabidopsis thaliana (Mouse-ear cress)).